We begin with the raw amino-acid sequence, 430 residues long: Probable dual-specificity RNA methyltransferase RlmN (430 aa).

Catalysis depends on glutamate 125, which acts as the Proton acceptor. In terms of domain architecture, Radical SAM core spans 152 to 395; that stretch reads RHGRVTLCVS…VTVRDTRGRE (244 aa). Cysteine 159 and cysteine 400 are disulfide-bonded. [4Fe-4S] cluster is bound by residues cysteine 166, cysteine 170, and cysteine 173. S-adenosyl-L-methionine contacts are provided by residues 221 to 222, serine 255, 278 to 280, and asparagine 357; these read GE and SLH. The active-site S-methylcysteine intermediate is cysteine 400.

Belongs to the radical SAM superfamily. RlmN family. Requires [4Fe-4S] cluster as cofactor.

The protein resides in the cytoplasm. It carries out the reaction adenosine(2503) in 23S rRNA + 2 reduced [2Fe-2S]-[ferredoxin] + 2 S-adenosyl-L-methionine = 2-methyladenosine(2503) in 23S rRNA + 5'-deoxyadenosine + L-methionine + 2 oxidized [2Fe-2S]-[ferredoxin] + S-adenosyl-L-homocysteine. The catalysed reaction is adenosine(37) in tRNA + 2 reduced [2Fe-2S]-[ferredoxin] + 2 S-adenosyl-L-methionine = 2-methyladenosine(37) in tRNA + 5'-deoxyadenosine + L-methionine + 2 oxidized [2Fe-2S]-[ferredoxin] + S-adenosyl-L-homocysteine. Its function is as follows. Specifically methylates position 2 of adenine 2503 in 23S rRNA and position 2 of adenine 37 in tRNAs. This is Probable dual-specificity RNA methyltransferase RlmN from Acidothermus cellulolyticus (strain ATCC 43068 / DSM 8971 / 11B).